The following is a 207-amino-acid chain: MGKGDPNKPRGKMSSYAYFVQTCREEHKKKHPDSSVNFAEFSRKCSERWKTMSSKEKGKFEEMAKGDKARYDREMKNYVPPKGEKKGKKKDPNAPKRPPSAFFLFCSEHRPKIKNDHPGLSIGDTAKKLGEMWSEQLAKDKQPYEQKAAKLKEKYEKDIAAYRAKSKSDAGKKGPGRPAGSKKKAEPEEEEEEEEDEEEEEEEEDEE.

2 DNA-binding regions (HMG box) span residues 9–79 and 95–163; these read PRGK…KNYV and PKRP…AAYR. Residues Cys-23 and Cys-45 each carry the cysteine sulfonic acid (-SO3H); alternate modification. A disulfide bond links Cys-23 and Cys-45. Positions 52 to 76 are enriched in basic and acidic residues; that stretch reads MSSKEKGKFEEMAKGDKARYDREMK. Positions 52-102 are disordered; the sequence is MSSKEKGKFEEMAKGDKARYDREMKNYVPPKGEKKGKKKDPNAPKRPPSAF. Cys-106 is modified (cysteine sulfonic acid (-SO3H)). The segment covering 162-172 has biased composition (basic and acidic residues); the sequence is YRAKSKSDAGK. Residues 162–207 form a disordered region; it reads YRAKSKSDAGKKGPGRPAGSKKKAEPEEEEEEEEDEEEEEEEEDEE. Residues 187-207 show a composition bias toward acidic residues; sequence PEEEEEEEEDEEEEEEEEDEE.

Belongs to the HMGB family. In terms of processing, reduction/oxidation of cysteine residues Cys-23, Cys-45 and Cys-106 and a possible intramolecular disulfide bond involving Cys-23 and Cys-45 give rise to different redox forms with specific functional activities in various cellular compartments: 1- fully reduced HMGB2 (HMGB2C23hC45hC106h), 2- disulfide HMGB2 (HMGB2C23-C45C106h) and 3- sulfonyl HMGB2 (HMGB2C23soC45soC106so).

Its subcellular location is the nucleus. The protein resides in the chromosome. It localises to the cytoplasm. It is found in the secreted. Multifunctional protein with various roles in different cellular compartments. May act in a redox sensitive manner. Associates with chromatin and binds DNA with a preference to non-canonical DNA structures such as single-stranded DNA. Can bent DNA and enhance DNA flexibility by looping thus providing a mechanism to promote activities on various gene promoters. Proposed to be involved in the innate immune response to nucleic acids by acting as a cytoplasmic promiscuous immunogenic DNA/RNA sensor. Involved in inflammatory response to antigenic stimulus coupled with pro-inflammatory activity. The sequence is that of High mobility group protein B2 (HMGB2) from Gallus gallus (Chicken).